The following is a 675-amino-acid chain: PTS system glucose-specific EIICBA component (675 aa).

The PTS EIIC type-1 domain occupies 3–414 (KKLFGQMQRI…FNYKTPGRED (412 aa)). 11 consecutive transmembrane segments (helical) span residues 16-36 (LMLP…GTAF), 59-79 (MLTG…ALGV), 81-101 (IGLA…FIIL), 126-146 (VLGI…GALA), 170-190 (FVPI…AIIW), 211-231 (LAVF…LHHI), 273-293 (FMQG…LAIY), 303-323 (VVAG…ITEP), 328-348 (FLFV…LSFL), 355-375 (VHLG…GILP), and 378-398 (TAWW…YFVF). Residues 425 to 506 (SQLPFDVLKA…AKIISGEITK (82 aa)) form the PTS EIIB type-1 domain. The Phosphocysteine intermediate; for EIIB activity role is filled by Cys447. A PTS EIIA type-1 domain is found at 547–651 (DKVFSEKMMG…SIITPVIITN (105 aa)). His599 (tele-phosphohistidine intermediate; for EIIA activity) is an active-site residue.

The protein localises to the cell membrane. The enzyme catalyses N(pros)-phospho-L-histidyl-[protein] + D-glucose(out) = D-glucose 6-phosphate(in) + L-histidyl-[protein]. Functionally, the phosphoenolpyruvate-dependent sugar phosphotransferase system (sugar PTS), a major carbohydrate active transport system, catalyzes the phosphorylation of incoming sugar substrates concomitantly with their translocation across the cell membrane. This system is involved in glucose transport. This chain is PTS system glucose-specific EIICBA component (ptsG), found in Staphylococcus epidermidis.